The primary structure comprises 548 residues: Probable malate:quinone oxidoreductase (548 aa).

The protein belongs to the MQO family. The cofactor is FAD.

The enzyme catalyses (S)-malate + a quinone = a quinol + oxaloacetate. It participates in carbohydrate metabolism; tricarboxylic acid cycle; oxaloacetate from (S)-malate (quinone route): step 1/1. The protein is Probable malate:quinone oxidoreductase of Escherichia coli O6:K15:H31 (strain 536 / UPEC).